Reading from the N-terminus, the 245-residue chain is 1-(5-phosphoribosyl)-5-[(5-phosphoribosylamino)methylideneamino] imidazole-4-carboxamide isomerase (245 aa).

The active-site Proton acceptor is the Asp7. Asp129 functions as the Proton donor in the catalytic mechanism.

It belongs to the HisA/HisF family.

It localises to the cytoplasm. It catalyses the reaction 1-(5-phospho-beta-D-ribosyl)-5-[(5-phospho-beta-D-ribosylamino)methylideneamino]imidazole-4-carboxamide = 5-[(5-phospho-1-deoxy-D-ribulos-1-ylimino)methylamino]-1-(5-phospho-beta-D-ribosyl)imidazole-4-carboxamide. Its pathway is amino-acid biosynthesis; L-histidine biosynthesis; L-histidine from 5-phospho-alpha-D-ribose 1-diphosphate: step 4/9. This Escherichia coli (strain 55989 / EAEC) protein is 1-(5-phosphoribosyl)-5-[(5-phosphoribosylamino)methylideneamino] imidazole-4-carboxamide isomerase.